The sequence spans 221 residues: U1 small nuclear ribonucleoprotein C (221 aa).

A Matrin-type zinc finger spans residues 4–36 (HYCDYCDVFLTHDSVSVRKAHNSGRNHLQNVRE). The tract at residues 80–221 (GAGPLSGSSD…PHSRTGYGPR (142 aa)) is disordered. A compositionally biased stretch (pro residues) spans 142-158 (YSRPPPQGGPYSRPPPD). The span at 178–190 (PLGYGAPLPGAYP) shows a compositional bias: low complexity. A compositionally biased stretch (pro residues) spans 191–204 (SGPPPNMRGPPPPL).

It belongs to the U1 small nuclear ribonucleoprotein C family. U1 snRNP is composed of the 7 core Sm proteins B/B', D1, D2, D3, E, F and G that assemble in a heptameric protein ring on the Sm site of the small nuclear RNA to form the core snRNP, and at least 3 U1 snRNP-specific proteins U1-70K, U1-A and U1-C. U1-C interacts with U1 snRNA and the 5' splice-site region of the pre-mRNA.

The protein localises to the nucleus. In terms of biological role, component of the spliceosomal U1 snRNP, which is essential for recognition of the pre-mRNA 5' splice-site and the subsequent assembly of the spliceosome. U1-C is directly involved in initial 5' splice-site recognition for both constitutive and regulated alternative splicing. The interaction with the 5' splice-site seems to precede base-pairing between the pre-mRNA and the U1 snRNA. Stimulates commitment or early (E) complex formation by stabilizing the base pairing of the 5' end of the U1 snRNA and the 5' splice-site region. The sequence is that of U1 small nuclear ribonucleoprotein C from Mycosarcoma maydis (Corn smut fungus).